A 705-amino-acid polypeptide reads, in one-letter code: Solute carrier family 28 member 3 (705 aa).

Basic and acidic residues predominate over residues 1–21 (MSRSDPDPGKNSEPSKSKMSL). Residues 1–96 (MSRSDPDPGK…TEEESEDERQ (96 aa)) are disordered. Topologically, residues 1–119 (MSRSDPDPGK…FCRKHRVILQ (119 aa)) are cytoplasmic. Positions 48 to 63 (APGNSTVRSRVVQSGE) are enriched in polar residues. Basic and acidic residues predominate over residues 65 to 74 (GRAKQDDRQI). A helical transmembrane segment spans residues 120-140 (HTIWAVLLTGFLALVIAACAL). Residues 141–145 (NFHRA) lie on the Extracellular side of the membrane. The chain crosses the membrane as a helical span at residues 146-166 (LPLFVITLVTIFFVVWDRLMA). Residues 167–190 (KYEQRIDDVLSPGKRLLERHWFWL) lie on the Cytoplasmic side of the membrane. A helical membrane pass occupies residues 191 to 211 (KWVVWCSLILAVILWLALDTA). The Extracellular portion of the chain corresponds to 212–214 (RLG). Residues 215–236 (QQQLISFGGLVMYIVLLFLFSK) form a helical membrane-spanning segment. Residues 237–244 (HPTRVYWR) are Cytoplasmic-facing. A helical transmembrane segment spans residues 245–264 (PVFWGIGLQFLLGLLILRTR). Residues 265–301 (PGFVAFDWMGKQVQTFLGYTDAGAQFVFGEKYTDHFF) are Extracellular-facing. The chain crosses the membrane as a helical span at residues 302–322 (AFKILPIVVFFSTVMSMLYYL). At 323–346 (GLMQWIIRKVGWLMLVTMGSSPIE) the chain is on the cytoplasmic side. Positions 347 to 365 (SVVAAGNIFVGQTESPLLV) form an intramembrane region, helical. At 366 to 378 (QPYLPHVTKSELH) the chain is on the cytoplasmic side. Residues 379–401 (TIMTAGFATIAGSVLGAYISFGV) traverse the membrane as a helical segment. The Extracellular portion of the chain corresponds to 402–403 (SS). The helical transmembrane segment at 404 to 425 (THLLTASVMSAPAALAVAKLFW) threads the bilayer. The Cytoplasmic segment spans residues 426-460 (PETEKPKITLKNAMKMENGDSRNLLEAATQGASSS). A helical transmembrane segment spans residues 461–486 (IPLVANIAANLIAFLALLSFVNSALS). Topologically, residues 487-524 (WFGSMFDYPQLSFELICSYIFMPFSFMMGVDWQDRFMV) are extracellular. The helical intramembrane region spans 525–544 (AKLIGYKTFFNEFVAYEHLS). The Extracellular portion of the chain corresponds to 545-583 (KFINLRKAAGPKFVNGVQQYMSIRSETIATYALCGFANF). Residues 584-594 (GSLGIVIGGLT) form a helical membrane-spanning segment. Over 595-607 (SIAPSRKRDIASG) the chain is Cytoplasmic. A helical membrane pass occupies residues 608–630 (AMRALIAGTIACFMTACIAGMLS). Residues 631–705 (DTPVAINCHH…LNCGWIPNIP (75 aa)) are Extracellular-facing.

The protein belongs to the concentrative nucleoside transporter (CNT) (TC 2.A.41) family. In terms of assembly, homotrimer. In terms of tissue distribution, expressed in kidney; in the proximal tubule, glomerulus and cortical collecting duct.

It is found in the cell membrane. It catalyses the reaction thymidine(out) + 2 Na(+)(out) = thymidine(in) + 2 Na(+)(in). It carries out the reaction cytidine(out) + 2 Na(+)(out) = cytidine(in) + 2 Na(+)(in). The enzyme catalyses uridine(out) + 2 Na(+)(out) = uridine(in) + 2 Na(+)(in). The catalysed reaction is adenosine(out) + 2 Na(+)(out) = adenosine(in) + 2 Na(+)(in). It catalyses the reaction guanosine(out) + 2 Na(+)(out) = guanosine(in) + 2 Na(+)(in). It carries out the reaction inosine(out) + 2 Na(+)(out) = inosine(in) + 2 Na(+)(in). Functionally, sodium-dependent, pyrimidine- and purine-selective. Involved in the homeostasis of endogenous nucleosides. Exhibits the transport characteristics of the nucleoside transport system cib or N3 subtype (N3/cib) (with marked transport of both thymidine and inosine). Employs a 2:1 sodium/nucleoside ratio. Also able to transport gemcitabine, 3'-azido-3'-deoxythymidine (AZT), ribavirin and 3-deazauridine. The chain is Solute carrier family 28 member 3 (Slc28a3) from Rattus norvegicus (Rat).